The chain runs to 346 residues: Probable dual-specificity RNA methyltransferase RlmN (346 aa).

The Proton acceptor role is filled by Glu92. Residues 98–332 enclose the Radical SAM core domain; sequence TDQRLTVCVS…VSLRASRGLD (235 aa). Cys105 and Cys337 are joined by a disulfide. [4Fe-4S] cluster is bound by residues Cys112, Cys116, and Cys119. S-adenosyl-L-methionine contacts are provided by residues 159–160, Ser189, 218–220, and Asn294; these read GE and SLH. Cys337 (S-methylcysteine intermediate) is an active-site residue.

The protein belongs to the radical SAM superfamily. RlmN family. [4Fe-4S] cluster serves as cofactor.

It localises to the cytoplasm. The catalysed reaction is adenosine(2503) in 23S rRNA + 2 reduced [2Fe-2S]-[ferredoxin] + 2 S-adenosyl-L-methionine = 2-methyladenosine(2503) in 23S rRNA + 5'-deoxyadenosine + L-methionine + 2 oxidized [2Fe-2S]-[ferredoxin] + S-adenosyl-L-homocysteine. It catalyses the reaction adenosine(37) in tRNA + 2 reduced [2Fe-2S]-[ferredoxin] + 2 S-adenosyl-L-methionine = 2-methyladenosine(37) in tRNA + 5'-deoxyadenosine + L-methionine + 2 oxidized [2Fe-2S]-[ferredoxin] + S-adenosyl-L-homocysteine. Its function is as follows. Specifically methylates position 2 of adenine 2503 in 23S rRNA and position 2 of adenine 37 in tRNAs. This Synechococcus sp. (strain CC9311) protein is Probable dual-specificity RNA methyltransferase RlmN.